Consider the following 881-residue polypeptide: Translation initiation factor IF-2 (881 aa).

Disordered stretches follow at residues Lys31–Pro147 and Ser165–Glu291. Residues Asn42 to Val55 show a composition bias toward basic and acidic residues. Positions Ala68–Thr77 are enriched in polar residues. The span at Val114–Val128 shows a compositional bias: acidic residues. The span at Pro191–Ser203 shows a compositional bias: basic and acidic residues. Polar residues predominate over residues Gly204–Pro233. Residues Tyr235–Gly267 are compositionally biased toward basic and acidic residues. A compositionally biased stretch (basic residues) spans Arg278–Lys287. Positions Ile387–Lys556 constitute a tr-type G domain. Residues Gly396–Thr403 are G1. Residue Gly396 to Thr403 participates in GTP binding. The tract at residues Ala421–His425 is G2. The G3 stretch occupies residues Asp442–Gly445. GTP is bound by residues Asp442 to His446 and Asn496 to Asp499. A G4 region spans residues Asn496 to Asp499. The interval Ser532–Lys534 is G5.

The protein belongs to the TRAFAC class translation factor GTPase superfamily. Classic translation factor GTPase family. IF-2 subfamily.

Its subcellular location is the cytoplasm. One of the essential components for the initiation of protein synthesis. Protects formylmethionyl-tRNA from spontaneous hydrolysis and promotes its binding to the 30S ribosomal subunits. Also involved in the hydrolysis of GTP during the formation of the 70S ribosomal complex. The sequence is that of Translation initiation factor IF-2 from Chlamydia felis (strain Fe/C-56) (Chlamydophila felis).